A 280-amino-acid polypeptide reads, in one-letter code: Thiamine-phosphate synthase (280 aa).

A disordered region spans residues 1–64; the sequence is MGWSGSPLTL…ATGRGGLRMT (64 aa). Over residues 42–55 the composition is skewed to basic and acidic residues; sequence GRGELRSRERRGEA. 4-amino-2-methyl-5-(diphosphooxymethyl)pyrimidine is bound by residues 104-108 and asparagine 141; that span reads QLRCK. Residues aspartate 142 and aspartate 161 each coordinate Mg(2+). Residue serine 179 coordinates 4-amino-2-methyl-5-(diphosphooxymethyl)pyrimidine. 205–207 contacts 2-[(2R,5Z)-2-carboxy-4-methylthiazol-5(2H)-ylidene]ethyl phosphate; it reads TPT. Lysine 208 contacts 4-amino-2-methyl-5-(diphosphooxymethyl)pyrimidine. Residue glycine 236 coordinates 2-[(2R,5Z)-2-carboxy-4-methylthiazol-5(2H)-ylidene]ethyl phosphate.

It belongs to the thiamine-phosphate synthase family. Mg(2+) serves as cofactor.

The enzyme catalyses 2-[(2R,5Z)-2-carboxy-4-methylthiazol-5(2H)-ylidene]ethyl phosphate + 4-amino-2-methyl-5-(diphosphooxymethyl)pyrimidine + 2 H(+) = thiamine phosphate + CO2 + diphosphate. The catalysed reaction is 2-(2-carboxy-4-methylthiazol-5-yl)ethyl phosphate + 4-amino-2-methyl-5-(diphosphooxymethyl)pyrimidine + 2 H(+) = thiamine phosphate + CO2 + diphosphate. It catalyses the reaction 4-methyl-5-(2-phosphooxyethyl)-thiazole + 4-amino-2-methyl-5-(diphosphooxymethyl)pyrimidine + H(+) = thiamine phosphate + diphosphate. It functions in the pathway cofactor biosynthesis; thiamine diphosphate biosynthesis; thiamine phosphate from 4-amino-2-methyl-5-diphosphomethylpyrimidine and 4-methyl-5-(2-phosphoethyl)-thiazole: step 1/1. In terms of biological role, condenses 4-methyl-5-(beta-hydroxyethyl)thiazole monophosphate (THZ-P) and 2-methyl-4-amino-5-hydroxymethyl pyrimidine pyrophosphate (HMP-PP) to form thiamine monophosphate (TMP). The sequence is that of Thiamine-phosphate synthase from Deinococcus radiodurans (strain ATCC 13939 / DSM 20539 / JCM 16871 / CCUG 27074 / LMG 4051 / NBRC 15346 / NCIMB 9279 / VKM B-1422 / R1).